We begin with the raw amino-acid sequence, 209 residues long: uncharacterized protein (209 aa).

This is an uncharacterized protein from Orgyia pseudotsugata (Douglas-fir tussock moth).